The sequence spans 874 residues: Probable leucine--tRNA ligase, cytoplasmic (874 aa).

A 'HIGH' region motif is present at residues 36–46 (PYMNGRLHLGH). Positions 544–548 (KMSKS) match the 'KMSKS' region motif. ATP is bound at residue lysine 547.

This sequence belongs to the class-I aminoacyl-tRNA synthetase family.

The protein resides in the cytoplasm. The catalysed reaction is tRNA(Leu) + L-leucine + ATP = L-leucyl-tRNA(Leu) + AMP + diphosphate. In Encephalitozoon cuniculi (strain GB-M1) (Microsporidian parasite), this protein is Probable leucine--tRNA ligase, cytoplasmic.